Reading from the N-terminus, the 1340-residue chain is Pleckstrin homology domain-containing family G member 2 (1340 aa).

The segment covering 34–44 (TPTAQAATTMA) has biased composition (polar residues). The tract at residues 34–76 (TPTAQAATTMASPRGSGSSTSLSTVGSEGDPSPACSASRPEPL) is disordered. Residues 45–62 (SPRGSGSSTSLSTVGSEG) show a composition bias toward low complexity. One can recognise a DH domain in the interval 98 to 279 (RLERVAREIV…TAVAWYINDM (182 aa)). In terms of domain architecture, PH spans 309 to 407 (ELVLEGTFRG…WIHCLQRLFF (99 aa)). 7 disordered regions span residues 431–623 (PKSK…IPCI), 684–743 (LPGP…SVQG), 820–855 (MQRA…EAEP), 907–979 (NVSD…PSAG), 991–1028 (TTSL…EQRD), 1047–1069 (PVCT…STDF), and 1125–1146 (PLSS…SLTD). The residue at position 441 (Thr441) is a Phosphothreonine. Phosphoserine is present on residues Ser446 and Ser465. Basic and acidic residues predominate over residues 560–572 (DIPKFPRDSRVPV). The segment covering 588–600 (SEEEEEEDLETDE) has biased composition (acidic residues). 5 stretches are compositionally biased toward polar residues: residues 703 to 714 (SGSNPGRLSESP), 820 to 831 (MQRAETRASTNA), 907 to 921 (NVSD…SSNS), 930 to 945 (GQSN…TSLL), and 956 to 972 (PTAS…SQVP). The span at 1049-1059 (CTSSPDQQIPA) shows a compositional bias: polar residues. Position 1215 is a phosphothreonine (Thr1215). 2 positions are modified to phosphoserine: Ser1219 and Ser1269. Residues 1250–1340 (RRQGPGGEGT…VGPSQGPGGS (91 aa)) form a disordered region. The segment covering 1276 to 1288 (PSPPPQPQPPAPP) has biased composition (pro residues). The span at 1319 to 1333 (HPALLAAPHPGAVGP) shows a compositional bias: low complexity.

As to expression, expressed in thymus, skeletal muscle, lung, testis, uterus, pancreas and heart and also expressed during embryogenesis.

Its function is as follows. May be a transforming oncogene with exchange activity for CDC42. May be a guanine-nucleotide exchange factor (GEF) for RAC1 and CDC42. Activated by the binding to subunits beta and gamma of the heterotrimeric guanine nucleotide-binding protein (G protein). Involved in the regulation of actin polymerization. The protein is Pleckstrin homology domain-containing family G member 2 (Plekhg2) of Mus musculus (Mouse).